The following is a 143-amino-acid chain: Anti-sigma F factor (143 aa).

The protein belongs to the anti-sigma-factor family.

The catalysed reaction is L-seryl-[protein] + ATP = O-phospho-L-seryl-[protein] + ADP + H(+). It carries out the reaction L-threonyl-[protein] + ATP = O-phospho-L-threonyl-[protein] + ADP + H(+). Its function is as follows. Binds to sigma F and blocks its ability to form an RNA polymerase holoenzyme (E-sigma F). Phosphorylates SpoIIAA on a serine residue. This phosphorylation may enable SpoIIAA to act as an anti-anti-sigma factor that counteracts SpoIIAB and thus releases sigma F from inhibition. The protein is Anti-sigma F factor of Clostridium botulinum (strain Eklund 17B / Type B).